The following is a 578-amino-acid chain: Tetratricopeptide repeat protein ttc-39B (578 aa).

TPR repeat units lie at residues 297 to 330 (AIML…QDVY), 481 to 514 (CLYY…ESSI), and 522 to 554 (PNAT…YKSY).

In Caenorhabditis elegans, this protein is Tetratricopeptide repeat protein ttc-39B.